Reading from the N-terminus, the 874-residue chain is Alanine--tRNA ligase (874 aa).

Zn(2+) is bound by residues His562, His566, Cys665, and His669.

It belongs to the class-II aminoacyl-tRNA synthetase family. Zn(2+) is required as a cofactor.

It is found in the cytoplasm. The enzyme catalyses tRNA(Ala) + L-alanine + ATP = L-alanyl-tRNA(Ala) + AMP + diphosphate. Functionally, catalyzes the attachment of alanine to tRNA(Ala) in a two-step reaction: alanine is first activated by ATP to form Ala-AMP and then transferred to the acceptor end of tRNA(Ala). Also edits incorrectly charged Ser-tRNA(Ala) and Gly-tRNA(Ala) via its editing domain. In Pseudomonas putida (strain ATCC 700007 / DSM 6899 / JCM 31910 / BCRC 17059 / LMG 24140 / F1), this protein is Alanine--tRNA ligase.